Consider the following 203-residue polypeptide: Urease accessory protein UreG (203 aa).

Residue 10-17 participates in GTP binding; it reads GPVGAGKT.

Belongs to the SIMIBI class G3E GTPase family. UreG subfamily. As to quaternary structure, homodimer. UreD, UreF and UreG form a complex that acts as a GTP-hydrolysis-dependent molecular chaperone, activating the urease apoprotein by helping to assemble the nickel containing metallocenter of UreC. The UreE protein probably delivers the nickel.

It is found in the cytoplasm. Facilitates the functional incorporation of the urease nickel metallocenter. This process requires GTP hydrolysis, probably effectuated by UreG. This chain is Urease accessory protein UreG, found in Kocuria rhizophila (strain ATCC 9341 / DSM 348 / NBRC 103217 / DC2201).